The primary structure comprises 192 residues: MTLPAAFYERDTVTVAKDLLGCLLVHREEVTTAGRIVEVEAYLRGDPAAHSYRGTTKRNRVMFGPAGHAYVYRIYGLHTCVNVVTGTEGAGEAVLVRALEPVVGLDLMQARRGTDDPLSLASGPGKLTQALGITMDLNGTSLRDGPLQVRSPANPPELQPENIVQTTRVGITKAADLPLRFYLKGSRYVSRR.

It belongs to the DNA glycosylase MPG family.

The protein is Putative 3-methyladenine DNA glycosylase of Methanoculleus marisnigri (strain ATCC 35101 / DSM 1498 / JR1).